Here is a 662-residue protein sequence, read N- to C-terminus: Probable lysophospholipase 3 (662 aa).

The first 19 residues, 1 to 19, serve as a signal peptide directing secretion; the sequence is MLFNCFGILALLQILPALA. Asparagine 74, asparagine 127, asparagine 162, asparagine 196, asparagine 266, asparagine 274, asparagine 303, asparagine 376, asparagine 406, asparagine 411, asparagine 483, asparagine 518, asparagine 523, asparagine 547, asparagine 556, asparagine 574, asparagine 596, and asparagine 613 each carry an N-linked (GlcNAc...) asparagine glycan. The PLA2c domain maps to 76–617; that stretch reads TCPSDYMLRP…EQYCWNGTTV (542 aa).

It belongs to the lysophospholipase family.

The protein resides in the secreted. It catalyses the reaction a 1-acyl-sn-glycero-3-phosphocholine + H2O = sn-glycerol 3-phosphocholine + a fatty acid + H(+). In terms of biological role, catalyzes the release of fatty acids from lysophospholipids. The protein is Probable lysophospholipase 3 (plb3) of Schizosaccharomyces pombe (strain 972 / ATCC 24843) (Fission yeast).